The primary structure comprises 436 residues: MDLGTTKYIIYTELIADGYVEKHDVIGAIFGQTEGLLSNELDLRDLQKSGRIGRIDVELENINGKSFAKITLPSSLDKVETSILAATLETIDRVGPCFATVKITEVEDIRVSKRQYITNRARSILRKLMDEMIDTYEITEEIKESLRTEEIMEYGPENLPCGPNIIHSDSIIVVEGRADVLNLLRCGIKNTVAVEGTSVPKSIMELTKKKTTTAFTDGDRGGELILKELLQTCDIDYVARAPYGKEVEGTSKKELMKCLRAKVPVEQIVGNNCNGSGVIESNTPKEIVEPITPKHFEKVETPAVIEPVFKEDAIEEETIIVEPVKKAETEIIDVDATNETQSEKKFSGVKEIVDSIKNTGNVKFVVDGTEKTNTFKEFLTNIHEIKKMDFFAADMPISQKIVDLLYDKTPIIVGKEINVTKKPVNLRLFSFDEIVA.

Residues 169-243 (DSIIVVEGRA…DIDYVARAPY (75 aa)) enclose the Toprim domain. Mg(2+)-binding residues include Glu175, Asp217, and Asp219.

It belongs to the archaeal DnaG primase family. As to quaternary structure, forms a ternary complex with MCM helicase and DNA. Requires Mg(2+) as cofactor.

The catalysed reaction is ssDNA + n NTP = ssDNA/pppN(pN)n-1 hybrid + (n-1) diphosphate.. In terms of biological role, RNA polymerase that catalyzes the synthesis of short RNA molecules used as primers for DNA polymerase during DNA replication. The sequence is that of DNA primase DnaG from Methanococcus maripaludis (strain DSM 14266 / JCM 13030 / NBRC 101832 / S2 / LL).